Reading from the N-terminus, the 282-residue chain is Acetylglutamate kinase (282 aa).

Residues 62–63 (GG), arginine 84, and asparagine 178 contribute to the substrate site.

The protein belongs to the acetylglutamate kinase family. ArgB subfamily.

Its subcellular location is the cytoplasm. The enzyme catalyses N-acetyl-L-glutamate + ATP = N-acetyl-L-glutamyl 5-phosphate + ADP. Its pathway is amino-acid biosynthesis; L-arginine biosynthesis; N(2)-acetyl-L-ornithine from L-glutamate: step 2/4. Catalyzes the ATP-dependent phosphorylation of N-acetyl-L-glutamate. This chain is Acetylglutamate kinase, found in Thermotoga sp. (strain RQ2).